A 217-amino-acid polypeptide reads, in one-letter code: uncharacterized protein (217 aa).

Transmembrane regions (helical) follow at residues I4–T23, N44–V66, T76–I98, F111–I128, M132–L154, A166–F188, and L198–L215.

It localises to the cell membrane. This is an uncharacterized protein from Archaeoglobus fulgidus (strain ATCC 49558 / DSM 4304 / JCM 9628 / NBRC 100126 / VC-16).